Reading from the N-terminus, the 859-residue chain is Autoinducer 2 sensor kinase/phosphatase LuxQ (859 aa).

A run of 2 helical transmembrane segments spans residues Ala15–Ile35 and Ile280–Ser300. One can recognise a Histidine kinase domain in the interval Lys489–Asp711. At His492 the chain carries Phosphohistidine; by autocatalysis. The region spanning Lys736 to Lys851 is the Response regulatory domain. The residue at position 785 (Asp785) is a 4-aspartylphosphate.

Binds the complex formed by AI-2 and LuxP.

It localises to the cell inner membrane. The catalysed reaction is ATP + protein L-histidine = ADP + protein N-phospho-L-histidine.. Functionally, at low cell density, in absence of AI-2 (autoinducer 2), LuxQ has a kinase activity and autophosphorylates on a histidine residue. The phosphoryl group is then transferred to an aspartate residue in the response regulator domain. The phosphoryl group is transferred to LuxU, and ultimately to LuxO. At high cell density, in the presence of AI-2, the kinase activity is inactivated, and the response regulator domain has a phosphatase activity. The sequence is that of Autoinducer 2 sensor kinase/phosphatase LuxQ (luxQ) from Vibrio harveyi (Beneckea harveyi).